The following is a 344-amino-acid chain: Arginine N-succinyltransferase (344 aa).

Succinyl-CoA is bound at residue Leu125. Residue His229 is the Proton donor of the active site.

Belongs to the arginine N-succinyltransferase family.

It carries out the reaction succinyl-CoA + L-arginine = N(2)-succinyl-L-arginine + CoA + H(+). The protein operates within amino-acid degradation; L-arginine degradation via AST pathway; L-glutamate and succinate from L-arginine: step 1/5. Functionally, catalyzes the transfer of succinyl-CoA to arginine to produce N(2)-succinylarginine. This Shigella dysenteriae serotype 1 (strain Sd197) protein is Arginine N-succinyltransferase.